The sequence spans 164 residues: Respiratory growth induced protein 2 (164 aa).

The protein belongs to the RGI1 family.

The protein localises to the cytoplasm. Involved in the control of energetic metabolism and significantly contribute to cell fitness, especially under respiratory growth conditions. The chain is Respiratory growth induced protein 2 (RGI2) from Candida glabrata (strain ATCC 2001 / BCRC 20586 / JCM 3761 / NBRC 0622 / NRRL Y-65 / CBS 138) (Yeast).